Consider the following 131-residue polypeptide: D-ribose pyranase (131 aa).

Histidine 20 (proton donor) is an active-site residue. Residues aspartate 28, histidine 98, and 120-122 (YAN) each bind substrate.

Belongs to the RbsD / FucU family. RbsD subfamily. In terms of assembly, homodecamer.

Its subcellular location is the cytoplasm. The enzyme catalyses beta-D-ribopyranose = beta-D-ribofuranose. The protein operates within carbohydrate metabolism; D-ribose degradation; D-ribose 5-phosphate from beta-D-ribopyranose: step 1/2. In terms of biological role, catalyzes the interconversion of beta-pyran and beta-furan forms of D-ribose. The protein is D-ribose pyranase of Bacillus thuringiensis (strain Al Hakam).